The primary structure comprises 54 residues: Relaxin (54 aa).

At Gln1 the chain carries Pyrrolidone carboxylic acid. Cystine bridges form between Cys10/Cys41, Cys22/Cys54, and Cys40/Cys45.

It belongs to the insulin family. Heterodimer of a B chain and an A chain linked by two disulfide bonds.

It is found in the secreted. Its function is as follows. Relaxin is an ovarian hormone that acts with estrogen to produce dilatation of the birth canal in many mammals. The chain is Relaxin from Balaenoptera edeni (Pigmy Bryde's whale).